The chain runs to 893 residues: Exocyst complex component 4 (893 aa).

Residues 1–27 (MNENGATPVAAARRHRPLPAERATSNS) are disordered.

Belongs to the SEC8 family. The exocyst complex is composed of sec-3/exoc1, sec-5/exoc2, sec-6/exoc3, sec-8/exoc4, sec-10/exoc5, sec-15/exoc6, exo-70/exoc7 and exo-84/exoc8. As to expression, pseudocoelom.

Its function is as follows. Component of the exocyst complex involved in the docking of exocytic vesicles with fusion sites on the plasma membrane. The polypeptide is Exocyst complex component 4 (sec-8) (Caenorhabditis elegans).